The sequence spans 385 residues: 8-amino-7-oxononanoate synthase (385 aa).

R21 serves as a coordination point for substrate. Residue G108–F109 coordinates pyridoxal 5'-phosphate. H133 is a substrate binding site. Pyridoxal 5'-phosphate-binding residues include S179, H207, and T233. K236 carries the N6-(pyridoxal phosphate)lysine modification. A substrate-binding site is contributed by T352.

The protein belongs to the class-II pyridoxal-phosphate-dependent aminotransferase family. BioF subfamily. Homodimer. Pyridoxal 5'-phosphate serves as cofactor.

The catalysed reaction is 6-carboxyhexanoyl-[ACP] + L-alanine + H(+) = (8S)-8-amino-7-oxononanoate + holo-[ACP] + CO2. It participates in cofactor biosynthesis; biotin biosynthesis. Catalyzes the decarboxylative condensation of pimeloyl-[acyl-carrier protein] and L-alanine to produce 8-amino-7-oxononanoate (AON), [acyl-carrier protein], and carbon dioxide. This chain is 8-amino-7-oxononanoate synthase, found in Salmonella paratyphi C (strain RKS4594).